The chain runs to 302 residues: Oxygen-dependent coproporphyrinogen-III oxidase (302 aa).

Serine 94 is a substrate binding site. The a divalent metal cation site is built by histidine 98 and histidine 108. Histidine 108 serves as the catalytic Proton donor. 110-112 (NVR) contributes to the substrate binding site. Residues histidine 147 and histidine 177 each contribute to the a divalent metal cation site. Positions 242 to 277 (YVEFNLVYDRGTLFGLQTGGRTESILMSMPPLARWE) are important for dimerization. Position 260–262 (260–262 (GGR)) interacts with substrate.

Belongs to the aerobic coproporphyrinogen-III oxidase family. In terms of assembly, homodimer. The cofactor is a divalent metal cation.

The protein localises to the cytoplasm. It catalyses the reaction coproporphyrinogen III + O2 + 2 H(+) = protoporphyrinogen IX + 2 CO2 + 2 H2O. It functions in the pathway porphyrin-containing compound metabolism; protoporphyrin-IX biosynthesis; protoporphyrinogen-IX from coproporphyrinogen-III (O2 route): step 1/1. In terms of biological role, involved in the heme biosynthesis. Catalyzes the aerobic oxidative decarboxylation of propionate groups of rings A and B of coproporphyrinogen-III to yield the vinyl groups in protoporphyrinogen-IX. This chain is Oxygen-dependent coproporphyrinogen-III oxidase, found in Aeromonas salmonicida (strain A449).